We begin with the raw amino-acid sequence, 382 residues long: MSTYTQPVMLLLSGLLLLTLAIAVLNTLVPLWLAQEHMSTWQVGVVSSSYFTGNLVGTLLTGYVIKRIGFNRSYYLASFIFAAGCAGLGLMIGFWSWLAWRFVAGVGCAMIWVVVESALMCSGTSRNRGRLLAAYMMVYYVGTFLGQLLVSKVSTELMSVLPWVTGLTLAGILPLLFTRVLNQQAENHDSTSITSMLKLRQARLGVNGCIISGIVLGSLYGLMPLYLNHKGVSNASIGFWMAVLVSAGILGQWPIGRLADKFGRLLVLRVQVFVVILGSIAMLSQAAMAPALFILGAAGFTLYPVAMAWACEKVEHHQLVAMNQALLLSYTVGSLLGPSFTAMLMQNFSDNLLFIMIASVSFIYLLMLLRNAGHTPKPVAHV.

12 helical membrane passes run 14 to 34 (GLLLLTLAIAVLNTLVPLWLA), 45 to 65 (VVSSSYFTGNLVGTLLTGYVI), 79 to 99 (FIFAAGCAGLGLMIGFWSWLA), 102 to 122 (FVAGVGCAMIWVVVESALMCS), 131 to 151 (LLAAYMMVYYVGTFLGQLLVS), 157 to 177 (LMSVLPWVTGLTLAGILPLLF), 204 to 224 (LGVNGCIISGIVLGSLYGLMP), 235 to 255 (ASIGFWMAVLVSAGILGQWPI), 270 to 290 (VQVFVVILGSIAMLSQAAMAP), 291 to 311 (ALFILGAAGFTLYPVAMAWAC), 325 to 345 (ALLLSYTVGSLLGPSFTAMLM), and 348 to 368 (FSDNLLFIMIASVSFIYLLML).

It belongs to the major facilitator superfamily. YcaD (TC 2.A.1.26) family.

It localises to the cell inner membrane. This is an uncharacterized protein from Escherichia coli (strain K12 / MC4100 / BW2952).